The chain runs to 350 residues: Fe-S cluster assembly protein dre2 (350 aa).

The N-terminal SAM-like domain stretch occupies residues 23-156 (TSFNLRTLLL…KPDHSASVAV (134 aa)). Residues 157-242 (PLRLRRKDNS…EDTLLTEEDM (86 aa)) are linker. The disordered stretch occupies residues 165–209 (NSKTTAVSNAGPPVSTVEVPVSGKRKSVDMTEDVPEKDVPKNDVP). The segment covering 190–208 (KSVDMTEDVPEKDVPKNDV) has biased composition (basic and acidic residues). Cysteine 252, cysteine 263, cysteine 266, and cysteine 268 together coordinate [2Fe-2S] cluster. Residues 252–268 (CAPRAGKRRRACKDCTC) are fe-S binding site A. Residues cysteine 313, cysteine 316, cysteine 324, and cysteine 327 each coordinate [4Fe-4S] cluster. 2 short sequence motifs (cx2C motif) span residues 313–316 (CGNC) and 324–327 (CDGC). The segment at 313–327 (CGNCSLGDAFRCDGC) is fe-S binding site B.

Belongs to the anamorsin family. As to quaternary structure, monomer. Interacts with TAH18. Interacts with MIA40. The cofactor is [2Fe-2S] cluster. [4Fe-4S] cluster serves as cofactor.

The protein resides in the cytoplasm. The protein localises to the mitochondrion intermembrane space. Its function is as follows. Component of the cytosolic iron-sulfur (Fe-S) protein assembly (CIA) machinery required for the maturation of extramitochondrial Fe-S proteins. Part of an electron transfer chain functioning in an early step of cytosolic Fe-S biogenesis, facilitating the de novo assembly of a [4Fe-4S] cluster on the scaffold complex CFD1-NBP35. Electrons are transferred to DRE2 from NADPH via the FAD- and FMN-containing protein TAH18. TAH18-DRE2 are also required for the assembly of the diferric tyrosyl radical cofactor of ribonucleotide reductase (RNR), probably by providing electrons for reduction during radical cofactor maturation in the catalytic small subunit RNR2. In Sclerotinia sclerotiorum (strain ATCC 18683 / 1980 / Ss-1) (White mold), this protein is Fe-S cluster assembly protein dre2.